The sequence spans 522 residues: Maturase K (522 aa).

This sequence belongs to the intron maturase 2 family. MatK subfamily.

It localises to the plastid. It is found in the chloroplast. Functionally, usually encoded in the trnK tRNA gene intron. Probably assists in splicing its own and other chloroplast group II introns. This Tigridia pavonia (Mexican shell flower) protein is Maturase K.